Here is a 123-residue protein sequence, read N- to C-terminus: ATP synthase epsilon chain (123 aa).

A disordered region spans residues 96 to 123 (ESRKQSAETEHDKAVAESELRAVKRMEA).

It belongs to the ATPase epsilon chain family. In terms of assembly, F-type ATPases have 2 components, CF(1) - the catalytic core - and CF(0) - the membrane proton channel. CF(1) has five subunits: alpha(3), beta(3), gamma(1), delta(1), epsilon(1). CF(0) has three main subunits: a, b and c.

Its subcellular location is the cell membrane. Produces ATP from ADP in the presence of a proton gradient across the membrane. This is ATP synthase epsilon chain from Corynebacterium jeikeium (strain K411).